The following is a 527-amino-acid chain: Glucose-6-phosphate isomerase (527 aa).

Residue Glu323 is the Proton donor of the active site. Catalysis depends on residues His352 and Lys454.

This sequence belongs to the GPI family.

Its subcellular location is the cytoplasm. The enzyme catalyses alpha-D-glucose 6-phosphate = beta-D-fructose 6-phosphate. It participates in carbohydrate biosynthesis; gluconeogenesis. It functions in the pathway carbohydrate degradation; glycolysis; D-glyceraldehyde 3-phosphate and glycerone phosphate from D-glucose: step 2/4. Functionally, catalyzes the reversible isomerization of glucose-6-phosphate to fructose-6-phosphate. In Prochlorococcus marinus (strain MIT 9215), this protein is Glucose-6-phosphate isomerase.